A 384-amino-acid chain; its full sequence is Glucans biosynthesis protein C (384 aa).

Transmembrane regions (helical) follow at residues 17 to 37 (AWLM…THSW), 54 to 74 (FIHA…SYML), 91 to 111 (VGIP…ILLQ), 140 to 160 (LWFL…FTWF), 173 to 193 (AISL…YAAI), 212 to 232 (FIVM…LAFI), 240 to 260 (FTTP…AYLL), 274 to 294 (TESV…FSLG), 311 to 331 (ASLF…AYIT), and 338 to 358 (LIGF…LYEI).

The protein belongs to the acyltransferase 3 family. OpgC subfamily.

It is found in the cell membrane. It participates in glycan metabolism; osmoregulated periplasmic glucan (OPG) biosynthesis. Its function is as follows. Necessary for the succinyl substitution of periplasmic glucans. Could catalyze the transfer of succinyl residues from the cytoplasmic side of the membrane to the nascent glucan backbones on the periplasmic side of the membrane. The sequence is that of Glucans biosynthesis protein C from Salmonella agona (strain SL483).